Here is a 152-residue protein sequence, read N- to C-terminus: Natriuretic peptides A (152 aa).

An N-terminal signal peptide occupies residues 1 to 24 (MGSSAITVSFLLFLAFQLPGQTGA). 2 propeptides span residues 25-122 (NPVY…TAPR) and 92-102 (EGGVLGRGPWE). The disordered stretch occupies residues 58–101 (PSQVLSEQNEEAGAPLSPLSEMPPWMGEVNPAQREGGVLGRGPW). S128 bears the Phosphoserine mark. C129 and C145 are joined by a disulfide. The important for degradation of atrial natriuretic peptide by IDE stretch occupies residues 146–150 (NSFRY).

It belongs to the natriuretic peptide family. In terms of assembly, homodimer; disulfide-linked antiparallel dimer. The precursor molecule is proteolytically cleaved by CORIN at Arg-122 to produce the atrial natriuretic peptide. Undergoes further proteolytic cleavage by unknown proteases to give rise to long-acting natriuretic peptide, vessel dilator and kaliuretic peptide. Additional processing gives rise to the auriculin and atriopeptin peptides. In the kidneys, alternative processing by an unknown protease results in the peptide urodilatin. In terms of processing, cleavage by MME initiates degradation of the factor and thereby regulates its activity. Degradation by IDE results in reduced activation of NPR1 (in vitro). During IDE degradation, the resulting products can temporarily stimulate NPR2 to produce cGMP, before the fragments are completely degraded and inactivated by IDE (in vitro). Post-translationally, degraded by IDE. Phosphorylation on Ser-128 decreases vasorelaxant activity.

The protein localises to the secreted. Its subcellular location is the perikaryon. It is found in the cell projection. Hormone that plays a key role in mediating cardio-renal homeostasis, and is involved in vascular remodeling and regulating energy metabolism. Acts by specifically binding and stimulating NPR1 to produce cGMP, which in turn activates effector proteins, such as PRKG1, that drive various biological responses. Regulates vasodilation, natriuresis, diuresis and aldosterone synthesis and is therefore essential for regulating blood pressure, controlling the extracellular fluid volume and maintaining the fluid-electrolyte balance. Also involved in inhibiting cardiac remodeling and cardiac hypertrophy by inducing cardiomyocyte apoptosis and attenuating the growth of cardiomyocytes and fibroblasts. Plays a role in female pregnancy by promoting trophoblast invasion and spiral artery remodeling in uterus, and thus prevents pregnancy-induced hypertension. In adipose tissue, acts in various cGMP- and PKG-dependent pathways to regulate lipid metabolism and energy homeostasis. This includes up-regulating lipid metabolism and mitochondrial oxygen utilization by activating the AMP-activated protein kinase (AMPK), and increasing energy expenditure by acting via MAPK11 to promote the UCP1-dependent thermogenesis of brown adipose tissue. Binds the clearance receptor NPR3 which removes the hormone from circulation. In terms of biological role, may have a role in cardio-renal homeostasis through regulation of natriuresis, diuresis, vasodilation, and inhibiting aldosterone synthesis. In vitro, promotes the production of cGMP and induces vasodilation. May promote natriuresis, at least in part, by enhancing prostaglandin E2 synthesis resulting in the inhibition of renal Na+-K+-ATPase. However reports on the involvement of this peptide in mammal blood volume and blood pressure homeostasis are conflicting; according to a report, in vivo it is not sufficient to activate cGMP and does not inhibit collecting duct transport nor effect diuresis and natriuresis. Appears to bind to specific receptors that are distinct from the receptors bound by atrial natriuretic peptide and vessel dilator. Possibly enhances protein excretion in urine by decreasing proximal tubular protein reabsorption. Its function is as follows. May have a role in cardio-renal homeostasis through regulation of natriuresis, diuresis, and vasodilation. In vitro, promotes the production of cGMP and induces vasodilation. May promote natriuresis, at least in part, by enhancing prostaglandin E2 synthesis resulting in the inhibition of renal Na+-K+-ATPase. However reports on the involvement of this peptide in mammal blood volume and blood pressure homeostasis are conflicting; according to a report it is not sufficient to activate cGMP and does not inhibit collecting duct transport nor effect diuresis and natriuresis. Appears to bind to specific receptors that are distinct from the receptors bound by the atrial natriuretic and long-acting natriuretic peptides. Possibly functions in protein excretion in urine by maintaining the integrity of the proximal tubules and enhancing protein excretion by decreasing proximal tubular protein reabsorption. Functionally, may have a role in cardio-renal homeostasis through regulation of diuresis and inhibiting aldosterone synthesis. In vitro, promotes the production of cGMP and induces vasodilation. May promote natriuresis, at least in part, by enhancing prostaglandin E2 synthesis resulting in the inhibition of renal Na+-K+-ATPase. May have a role in potassium excretion but not sodium excretion (natriuresis). Possibly enhances protein excretion in urine by decreasing proximal tubular protein reabsorption. Hormone produced in the kidneys that appears to be important for maintaining cardio-renal homeostasis. Mediates vasodilation, natriuresis and diuresis primarily in the renal system, in order to maintain the extracellular fluid volume and control the fluid-electrolyte balance. Specifically binds and stimulates cGMP production by renal transmembrane receptors, likely NPR1. Urodilatin not ANP, may be the natriuretic peptide responsible for the regulation of sodium and water homeostasis in the kidney. In terms of biological role, may have a role in cardio-renal homeostasis through regulation of natriuresis and vasodilation. In vivo promotes natriuresis and in vitro, vasodilates renal artery strips. Its function is as follows. May have a role in cardio-renal homeostasis through regulation of regulation of natriuresis and vasodilation. In vivo promotes natriuresis. In vitro, vasodilates intestinal smooth muscle but not smooth muscle strips. Functionally, may have a role in cardio-renal homeostasis through regulation of natriuresis and vasodilation. In vivo promotes natriuresis. In vitro, selectively vasodilates intestinal and vascular smooth muscle strips. May have a role in cardio-renal homeostasis through regulation of natriuresis and vasodilation. In vivo promotes natriuresis. In vitro, selectively vasodilates intestinal smooth muscle but not vascular smooth muscle strips. The chain is Natriuretic peptides A (NPPA) from Bos taurus (Bovine).